A 196-amino-acid polypeptide reads, in one-letter code: Molybdenum cofactor guanylyltransferase (196 aa).

GTP-binding positions include 10-12 (LAG), lysine 23, asparagine 51, aspartate 69, and aspartate 99. Aspartate 99 contributes to the Mg(2+) binding site.

This sequence belongs to the MobA family. In terms of assembly, monomer. Mg(2+) serves as cofactor.

The protein localises to the cytoplasm. It carries out the reaction Mo-molybdopterin + GTP + H(+) = Mo-molybdopterin guanine dinucleotide + diphosphate. In terms of biological role, transfers a GMP moiety from GTP to Mo-molybdopterin (Mo-MPT) cofactor (Moco or molybdenum cofactor) to form Mo-molybdopterin guanine dinucleotide (Mo-MGD) cofactor. The protein is Molybdenum cofactor guanylyltransferase of Shewanella baltica (strain OS185).